Here is a 138-residue protein sequence, read N- to C-terminus: Phospholipase A2 homolog crotoxin acid subunit CA (138 aa).

A signal peptide spans 1-37 (MRALWIVAVLLVGVEGSLVEFETLMMKIAGRSGISYY). 8 cysteine pairs are disulfide-bonded: cysteine 42-cysteine 131, cysteine 44-cysteine 60, cysteine 59-cysteine 111, cysteine 65-cysteine 138, cysteine 66-cysteine 104, cysteine 73-cysteine 97, cysteine 91-cysteine 102, and cysteine 131-cysteine 138. Residues 79–82 (VYTY) constitute a propeptide that is removed on maturation. Glutamine 84 is subject to Pyrrolidone carboxylic acid. A propeptide spanning residues 119 to 124 (YDYKYL) is cleaved from the precursor. Position 125 is a pyrrolidone carboxylic acid (glutamine 125).

This sequence belongs to the phospholipase A2 family. Group II subfamily. D49 sub-subfamily. In terms of assembly, heterodimer of one of the acidic (CA1, CA2, CA3 or CA4) and one of the basic (CBa1, CBa2, CBb, CBc or CBd) subunits; non-covalently linked. The acidic subunit is non-toxic, without enzymatic activity and comprises 3 peptides that are cross-linked by 5 disulfide bridges. The basic subunit is toxic, has phospholipase A2 activity and is composed of a single chain. Multiple variants of each subunit give different crotoxin complexes that can be subdivided into 2 classes: (1) those of high toxicity, low PLA2 activity (CBb, CBc and CBd linked with high affinity to any CA) and high stability (K(d)=4.5 nM) and (2) those of moderate toxicity, high PLA2 activity (CBa2 linked with low affinity to any CA) and low stability (K(d)=25 nM). In terms of tissue distribution, expressed by the venom gland.

The protein resides in the secreted. CAalpha-CAbeta-CAgamma: The acidic subunit of crotoxin (CA) is a heterotrimer of three disulfide-linked chains generated by post-translational maturation of a PLA2-like precursor. CA has no PLA2 activity and is not neurotoxic by itself, but plays several important functions in the crotoxin complex by increasing the lethal potency of the uncomplexed CB subunit. It acts by physically occluding the hydrophobic interfacial binding surface (IBS) of CB. This effect decreases the adsorption of CB to phospholipid membranes, targeting the crotoxin complex to reach the specific presynaptic receptor (R48) at the neuromuscular junction. It also prevents the formation of the reactive CB dimer. Moreover, the CA subunit inhibits the catalytic activity by partially masking the catalytic site of CB and inhibits its anticoagulant activity. Its function is as follows. Heterodimer CA-CB: Crotoxin is a potent presynaptic neurotoxin that possesses phospholipase A2 (PLA2) activity and exerts a lethal action by blocking neuromuscular transmission. It consists of a non-covalent association of a basic and weakly toxic PLA2 subunit (CBa2, CBb, CBc, or CBd), with a small acidic, non-enzymatic and non-toxic subunit (CA1, CA2, CA3 or CA4). The complex acts by binding to a specific 48-kDa protein (R48/CAPT) receptor located on presynaptic membranes, forming a transient ternary complex CA-CB-R48, followed by dissociation of the CA-CB complex and release of the CA subunit. At equilibrium, only the CB subunits remain associated with the specific crotoxin receptor. In addition to neurotoxicity, crotoxin has been found to exert myotoxicity, nephrotoxicity, and cardiovascular toxicity. Moreover, anti-inflammatory, immunomodulatory, anti-tumor and analgesic effects of crotoxin have also been reported. Functionally, found in the venom as a monomer and stabilized by one disulfide bond (Cys-131 and Cys-138). This peptide induces potent antinociceptive effects in acute and chronic pain models. This effect is mediated by the release of peripheral dynorphin A, an endogenous agonist of kappa-opioid receptors, and this release is dependent on cannabinoid receptor CB2 activation. This Crotalus durissus terrificus (South American rattlesnake) protein is Phospholipase A2 homolog crotoxin acid subunit CA.